Consider the following 464-residue polypeptide: Argininosuccinate lyase (464 aa).

This sequence belongs to the lyase 1 family. Argininosuccinate lyase subfamily.

Its subcellular location is the cytoplasm. It carries out the reaction 2-(N(omega)-L-arginino)succinate = fumarate + L-arginine. It participates in amino-acid biosynthesis; L-arginine biosynthesis; L-arginine from L-ornithine and carbamoyl phosphate: step 3/3. The sequence is that of Argininosuccinate lyase from Pseudomonas savastanoi pv. phaseolicola (strain 1448A / Race 6) (Pseudomonas syringae pv. phaseolicola (strain 1448A / Race 6)).